A 203-amino-acid polypeptide reads, in one-letter code: Ribosome maturation factor RimP (203 aa).

Residues 1–21 show a composition bias toward polar residues; it reads MSDSEATTSTDRSESNSTATI. The disordered stretch occupies residues 1 to 23; sequence MSDSEATTSTDRSESNSTATIHN.

This sequence belongs to the RimP family.

It is found in the cytoplasm. Required for maturation of 30S ribosomal subunits. In Paenarthrobacter aurescens (strain TC1), this protein is Ribosome maturation factor RimP.